Consider the following 404-residue polypeptide: Protein translocase subunit SecF (404 aa).

6 helical membrane passes run 15-35 (KWYF…SMGA), 225-245 (LLAT…RFEL), 246-266 (IYGI…VGAF), 275-295 (LTVV…TIVV), 327-347 (ILTS…GGEV), and 355-375 (LVIG…PMLV).

It belongs to the SecD/SecF family. SecF subfamily. Forms a complex with SecD. Part of the essential Sec protein translocation apparatus which comprises SecA, SecYEG and auxiliary proteins SecDF. Other proteins may also be involved.

Its subcellular location is the cell inner membrane. Its function is as follows. Part of the Sec protein translocase complex. Interacts with the SecYEG preprotein conducting channel. SecDF uses the proton motive force (PMF) to complete protein translocation after the ATP-dependent function of SecA. The sequence is that of Protein translocase subunit SecF from Koribacter versatilis (strain Ellin345).